The following is a 237-amino-acid chain: 2-C-methyl-D-erythritol 4-phosphate cytidylyltransferase (237 aa).

The protein belongs to the IspD/TarI cytidylyltransferase family. IspD subfamily.

The catalysed reaction is 2-C-methyl-D-erythritol 4-phosphate + CTP + H(+) = 4-CDP-2-C-methyl-D-erythritol + diphosphate. The protein operates within isoprenoid biosynthesis; isopentenyl diphosphate biosynthesis via DXP pathway; isopentenyl diphosphate from 1-deoxy-D-xylulose 5-phosphate: step 2/6. In terms of biological role, catalyzes the formation of 4-diphosphocytidyl-2-C-methyl-D-erythritol from CTP and 2-C-methyl-D-erythritol 4-phosphate (MEP). The sequence is that of 2-C-methyl-D-erythritol 4-phosphate cytidylyltransferase from Clostridioides difficile (strain 630) (Peptoclostridium difficile).